The sequence spans 534 residues: Probable bifunctional tRNA threonylcarbamoyladenosine biosynthesis protein (534 aa).

The segment at 1–325 is kae1; sequence MLCLGIEGTA…YRTDEVDVPW (325 aa). Positions 108, 112, and 129 each coordinate Fe cation. Residues 129–133, Asp161, Gly174, Glu178, and Asn258 contribute to the L-threonylcarbamoyladenylate site; that span reads YVSGG. Asp286 lines the Fe cation pocket. One can recognise a Protein kinase domain in the interval 335-534; the sequence is LPPDILAKGA…EIESRGRYTD (200 aa). Residues 340–348 and Lys361 each bind ATP; that span reads LAKGAEANI. Asp451 acts as the Proton acceptor; for kinase activity in catalysis.

This sequence in the N-terminal section; belongs to the KAE1 / TsaD family. In the C-terminal section; belongs to the protein kinase superfamily. Tyr protein kinase family. BUD32 subfamily. Component of the KEOPS complex that consists of Kae1, Bud32, Cgi121 and Pcc1; the whole complex dimerizes. It depends on Fe(2+) as a cofactor.

The protein localises to the cytoplasm. It catalyses the reaction L-seryl-[protein] + ATP = O-phospho-L-seryl-[protein] + ADP + H(+). It carries out the reaction L-threonyl-[protein] + ATP = O-phospho-L-threonyl-[protein] + ADP + H(+). The catalysed reaction is L-threonylcarbamoyladenylate + adenosine(37) in tRNA = N(6)-L-threonylcarbamoyladenosine(37) in tRNA + AMP + H(+). Its function is as follows. Required for the formation of a threonylcarbamoyl group on adenosine at position 37 (t(6)A37) in tRNAs that read codons beginning with adenine. Is a component of the KEOPS complex that is probably involved in the transfer of the threonylcarbamoyl moiety of threonylcarbamoyl-AMP (TC-AMP) to the N6 group of A37. The Kae1 domain likely plays a direct catalytic role in this reaction. The Bud32 domain probably displays kinase activity that regulates Kae1 function. The sequence is that of Probable bifunctional tRNA threonylcarbamoyladenosine biosynthesis protein from Methanothermobacter thermautotrophicus (strain ATCC 29096 / DSM 1053 / JCM 10044 / NBRC 100330 / Delta H) (Methanobacterium thermoautotrophicum).